The chain runs to 138 residues: Basic phospholipase A2 homolog G6K49 (138 aa).

The signal sequence occupies residues 1–16 (MRTLWIMAVLLLGVEG). 7 disulfide bridges follow: Cys42–Cys132, Cys44–Cys60, Cys59–Cys112, Cys65–Cys138, Cys66–Cys105, Cys73–Cys98, and Cys91–Cys103. An important for membrane-damaging activities in eukaryotes and bacteria; heparin-binding region spans residues 122 to 133 (KKHRVTVKFLCK).

Belongs to the phospholipase A2 family. Group II subfamily. K49 sub-subfamily. In terms of assembly, homodimer; non-covalently linked. Expressed by the venom gland.

It localises to the secreted. Its function is as follows. Snake venom phospholipase A2 (PLA2) that lacks enzymatic activity. Displays myotoxic activities. A model of myotoxic mechanism has been proposed: an apo Lys49-PLA2 is activated by the entrance of a hydrophobic molecule (e.g. fatty acid) at the hydrophobic channel of the protein leading to a reorientation of a monomer. This reorientation causes a transition between 'inactive' to 'active' states, causing alignment of C-terminal and membrane-docking sites (MDoS) side-by-side and putting the membrane-disruption sites (MDiS) in the same plane, exposed to solvent and in a symmetric position for both monomers. The MDoS region stabilizes the toxin on membrane by the interaction of charged residues with phospholipid head groups. Subsequently, the MDiS region destabilizes the membrane with penetration of hydrophobic residues. This insertion causes a disorganization of the membrane, allowing an uncontrolled influx of ions (i.e. calcium and sodium), and eventually triggering irreversible intracellular alterations and cell death. The sequence is that of Basic phospholipase A2 homolog G6K49 from Calloselasma rhodostoma (Malayan pit viper).